A 145-amino-acid polypeptide reads, in one-letter code: Natriuretic peptides A (145 aa).

Residues 1 to 23 (MGTSFVGYLTFVLLLLALTKVRG) form the signal peptide. A propeptide spanning residues 24–117 (GPAYNSPLSS…KLRELLNAPR (94 aa)) is cleaved from the precursor. A disulfide bond links cysteine 125 and cysteine 141.

This sequence belongs to the natriuretic peptide family. In terms of processing, cleaved upon secretion to produce the functional hormone.

The protein resides in the secreted. Hormone playing a key role in cardiovascular homeostasis through regulation of natriuresis, diuresis, and vasodilation. Has a cGMP-stimulating activity. The sequence is that of Natriuretic peptides A from Aquarana catesbeiana (American bullfrog).